The sequence spans 27 residues: Larval-specific very high density lipoprotein (27 aa).

Homodimer. In terms of tissue distribution, hemolymph.

The protein localises to the secreted. It localises to the extracellular space. Functionally, unknown (it might play a role in lipid transport and/or storage protein metabolism during metamorphosis). The sequence is that of Larval-specific very high density lipoprotein from Apis mellifera (Honeybee).